Reading from the N-terminus, the 274-residue chain is AA9 family lytic polysaccharide monooxygenase A (274 aa).

Residues Met-1–Ala-22 form the signal peptide. His-23 contributes to the Cu(2+) binding site. An intrachain disulfide couples Cys-63 to Cys-194. (1,4-beta-D-glucosyl)n is bound by residues Gly-67, Asp-98, and Ser-100. His-101 provides a ligand contact to Cu(2+). Residue His-174 participates in O2 binding. A (1,4-beta-D-glucosyl)n-binding site is contributed by Asp-177. Position 191 (Tyr-191) interacts with Cu(2+).

The protein belongs to the polysaccharide monooxygenase AA9 family. Requires Cu(2+) as cofactor.

It localises to the secreted. It carries out the reaction [(1-&gt;4)-beta-D-glucosyl]n+m + reduced acceptor + O2 = 4-dehydro-beta-D-glucosyl-[(1-&gt;4)-beta-D-glucosyl]n-1 + [(1-&gt;4)-beta-D-glucosyl]m + acceptor + H2O.. Its function is as follows. Lytic polysaccharide monooxygenase (LPMO) that depolymerizes crystalline and amorphous polysaccharides via the oxidation of scissile alpha- or beta-(1-4)-glycosidic bonds, yielding C4 oxidation products. Catalysis by LPMOs requires the reduction of the active-site copper from Cu(II) to Cu(I) by a reducing agent and H(2)O(2) or O(2) as a cosubstrate. Cleaves a range of polysaccharides, including cellulose, xyloglucan, mixed-linkage glucan and glucomannan. In Collariella virescens (Soil fungus), this protein is AA9 family lytic polysaccharide monooxygenase A.